A 234-amino-acid polypeptide reads, in one-letter code: MTYKRVLLKLSGEALMGDKPYGIDPAIVQSIAEDVERVIANKVQLAIVVGGGNIFRGLKGSADGMDRATADYVGMLATVMNAISLQDGLERVGVETRVQTAIEMQEIAEPYIRRRAMRHLEKGRVVVFGGGCGNPFFTTDTTAALRAAEINAEVVMKATKVDGVYDRDPNKFKEAKKYSSLTYQQVLSDEIAVMDSTAIALCKDNNIPIMVFDIFKKGNISRAVAGESIGSLIS.

9 to 12 (KLSG) serves as a coordination point for ATP. G51 contributes to the UMP binding site. Positions 52 and 56 each coordinate ATP. Residues D71 and 132-139 (CGNPFFTT) contribute to the UMP site. ATP contacts are provided by T159, Y165, and D168.

It belongs to the UMP kinase family. In terms of assembly, homohexamer.

It localises to the cytoplasm. It carries out the reaction UMP + ATP = UDP + ADP. It participates in pyrimidine metabolism; CTP biosynthesis via de novo pathway; UDP from UMP (UMPK route): step 1/1. With respect to regulation, inhibited by UTP. Functionally, catalyzes the reversible phosphorylation of UMP to UDP. In Prochlorococcus marinus subsp. pastoris (strain CCMP1986 / NIES-2087 / MED4), this protein is Uridylate kinase.